The primary structure comprises 149 residues: Transcriptional repressor NrdR (149 aa).

A zinc finger spans residues 3 to 34 (CPFCAMEETKVIDSRLVSDGYQVRRRRECGYC). The ATP-cone domain occupies 49 to 139 (PKIIKNDGSR…VYLSFDDINQ (91 aa)).

The protein belongs to the NrdR family. Zn(2+) serves as cofactor.

Its function is as follows. Negatively regulates transcription of bacterial ribonucleotide reductase nrd genes and operons by binding to NrdR-boxes. The polypeptide is Transcriptional repressor NrdR (Histophilus somni (strain 129Pt) (Haemophilus somnus)).